A 797-amino-acid polypeptide reads, in one-letter code: Xaa-Pro dipeptidyl-peptidase (797 aa).

Active-site charge relay system residues include Ser-370, Asp-490, and His-521.

The protein belongs to the peptidase S15 family. As to quaternary structure, homodimer.

It is found in the cytoplasm. The enzyme catalyses Hydrolyzes Xaa-Pro-|- bonds to release unblocked, N-terminal dipeptides from substrates including Ala-Pro-|-p-nitroanilide and (sequentially) Tyr-Pro-|-Phe-Pro-|-Gly-Pro-|-Ile.. Functionally, removes N-terminal dipeptides sequentially from polypeptides having unsubstituted N-termini provided that the penultimate residue is proline. The polypeptide is Xaa-Pro dipeptidyl-peptidase (Lacticaseibacillus rhamnosus (Lactobacillus rhamnosus)).